A 450-amino-acid chain; its full sequence is MTATIKTLYRKLKHLKNSQEFEVNGWVVSSRGNDKIRFVTLNDGSSVENLQLVLKEDEIKKVNVDHLSLGAAVYAKGVLILTPEAKQPFELVVSELEIIGKVDNNFPIQKKETSLDFLREIPHLRHRTNLFRAIMIIRATLAYEIHQFFNKNDFINISVPIITSNDGEGAGETLLVDDESKDYFFKQKAFLGVTGQLHAEAYAAGFKNVYTFAPTFRAENSHTSRHLAEFWMIEPEMAFATLKDDIKIADSMLKTVIKNTIEKCPDEMKLLDFLKDNTLLPTLNEFIHKKITVLDYKVAVKKLLEHKYRFEEKNIYFGMDLASEHEKFISESIVKGPVAIINYPKDIKAFYMYQNADNKTVACFDLLVPGIGELIGGSQRESRYEKLVTRMAELNIPQEPLQWYLDLRKYGYAPSSGFGLGFERLVMYVTGISNIRDVIPFPRVAGTIKM.

Belongs to the class-II aminoacyl-tRNA synthetase family. As to quaternary structure, homodimer.

The protein resides in the cytoplasm. The catalysed reaction is tRNA(Asn) + L-asparagine + ATP = L-asparaginyl-tRNA(Asn) + AMP + diphosphate + H(+). The chain is Asparagine--tRNA ligase from Metamycoplasma arthritidis (strain 158L3-1) (Mycoplasma arthritidis).